Consider the following 445-residue polypeptide: ATP synthase subunit b-delta (445 aa).

Positions 1-168 (MSIFIGQLIG…PSSVVIDTAA (168 aa)) are ATP synthase subunit b. A helical transmembrane segment spans residues 3–23 (IFIGQLIGFAVIAFIIVKWVV). Residues 169–445 (TSRLRAASRQ…LAAAQTGLPD (277 aa)) are ATP synthase subunit delta.

The protein in the N-terminal section; belongs to the ATPase B chain family. This sequence in the C-terminal section; belongs to the ATPase delta chain family. F-type ATPases have 2 components, F(1) - the catalytic core - and F(0) - the membrane proton channel. F(1) has five subunits: alpha(3), beta(3), gamma(1), delta(1), epsilon(1). F(0) has three main subunits: a(1), b(2) and c(10-14). The alpha and beta chains form an alternating ring which encloses part of the gamma chain. F(1) is attached to F(0) by a central stalk formed by the gamma and epsilon chains, while a peripheral stalk is formed by the delta and b chains.

It is found in the cell membrane. Functionally, f(1)F(0) ATP synthase produces ATP from ADP in the presence of a proton or sodium gradient. F-type ATPases consist of two structural domains, F(1) containing the extramembraneous catalytic core and F(0) containing the membrane proton channel, linked together by a central stalk and a peripheral stalk. During catalysis, ATP synthesis in the catalytic domain of F(1) is coupled via a rotary mechanism of the central stalk subunits to proton translocation. In terms of biological role, this fusion protein includes a component of the F(0) channel (subunit b) and of the F(1) subunit (subunit delta). Two copies of subunit b and one of delta together form the peripheral 'stator' stalk which links F(1) to F(0). The chain is ATP synthase subunit b-delta (atpFH) from Mycolicibacterium smegmatis (strain ATCC 700084 / mc(2)155) (Mycobacterium smegmatis).